A 122-amino-acid polypeptide reads, in one-letter code: Large ribosomal subunit protein uL14 (122 aa).

Belongs to the universal ribosomal protein uL14 family. Part of the 50S ribosomal subunit. Forms a cluster with proteins L3 and L19. In the 70S ribosome, L14 and L19 interact and together make contacts with the 16S rRNA in bridges B5 and B8.

Binds to 23S rRNA. Forms part of two intersubunit bridges in the 70S ribosome. The chain is Large ribosomal subunit protein uL14 from Salinibacter ruber (strain DSM 13855 / M31).